The sequence spans 87 residues: Putative membrane protein insertion efficiency factor (87 aa).

The protein belongs to the UPF0161 family.

It is found in the cell membrane. In terms of biological role, could be involved in insertion of integral membrane proteins into the membrane. In Ligilactobacillus salivarius (strain UCC118) (Lactobacillus salivarius), this protein is Putative membrane protein insertion efficiency factor.